Here is a 260-residue protein sequence, read N- to C-terminus: ATP synthase subunit a (260 aa).

Helical transmembrane passes span 27–47 (FWTV…LFIW), 90–110 (IAPL…MDLI), 132–154 (SADV…YYSI), 208–228 (LIFI…LSVP), and 230–250 (AIFH…LTIV).

Belongs to the ATPase A chain family. F-type ATPases have 2 components, CF(1) - the catalytic core - and CF(0) - the membrane proton channel. CF(1) has five subunits: alpha(3), beta(3), gamma(1), delta(1), epsilon(1). CF(0) has three main subunits: a(1), b(2) and c(9-12). The alpha and beta chains form an alternating ring which encloses part of the gamma chain. CF(1) is attached to CF(0) by a central stalk formed by the gamma and epsilon chains, while a peripheral stalk is formed by the delta and b chains.

It is found in the cell inner membrane. Its function is as follows. Key component of the proton channel; it plays a direct role in the translocation of protons across the membrane. The protein is ATP synthase subunit a of Aeromonas hydrophila subsp. hydrophila (strain ATCC 7966 / DSM 30187 / BCRC 13018 / CCUG 14551 / JCM 1027 / KCTC 2358 / NCIMB 9240 / NCTC 8049).